The primary structure comprises 880 residues: uncharacterized protein (880 aa).

Disordered regions lie at residues 101–149 (KPIP…LRSE), 191–224 (PETS…ISTH), 240–273 (TTTT…PILK), 294–350 (NSNS…STTS), 425–446 (QPDS…ESQP), 470–508 (STST…SSSS), 536–561 (MESS…NDNS), 580–613 (APQS…NDDE), 682–713 (NTNT…NINN), and 844–880 (NSSG…KSEI). Residues 113 to 147 (ISIKEKEKEKEKEKEKEKEKEKEKEKEMKSTINLR) adopt a coiled-coil conformation. The span at 115–149 (IKEKEKEKEKEKEKEKEKEKEKEKEMKSTINLRSE) shows a compositional bias: basic and acidic residues. 2 stretches are compositionally biased toward low complexity: residues 193-223 (TSTP…SIST) and 240-256 (TTTT…PSSS). The segment covering 257-271 (IAGITNPTSRSSSPI) has biased composition (polar residues). Low complexity predominate over residues 294-332 (NSNSSSGGGNNNNKSISTPSSPIISRPITNKINNNNNNN). Residues 333 to 342 (QPQLHYNQPQ) show a composition bias toward polar residues. The segment covering 536-548 (MESSTTTTLLSEN) has biased composition (low complexity). The segment covering 589–613 (QPEDDPFFDFEDLSDDDDSNDNDDE) has biased composition (acidic residues). Low complexity predominate over residues 844–864 (NSSGSGNNSNDNSGSSSPSSS). Over residues 865 to 880 (KTNTLNQQSICIKSEI) the composition is skewed to polar residues.

This is an uncharacterized protein from Dictyostelium discoideum (Social amoeba).